The primary structure comprises 114 residues: UPF0102 protein Shew_0226 (114 aa).

This sequence belongs to the UPF0102 family.

The chain is UPF0102 protein Shew_0226 from Shewanella loihica (strain ATCC BAA-1088 / PV-4).